Here is a 169-residue protein sequence, read N- to C-terminus: Tumor suppressor ARF (169 aa).

An interaction with CDK5RAP3 and MDM2 region spans residues 1 to 63 (MGRRFLVTVR…RRGPHRNPGP (63 aa)). Positions 54–73 (RRGPHRNPGPGDDDGQRSRS) are disordered.

As to quaternary structure, does not interact with cyclins, CDK1, CDK2, CDK4, CDK5 or CDK6. Interacts with COMMD1. Binds to BCL6, E2F1, HUWE1, MDM2, MYC, NPM1/B23, TOP1/TOPOI and UBE2I/UBC9. Interacts with TBRG1. Interacts with CDKN2AIP and E4F1. Interacts with CDK5RAP3 and MDM2; form a ternary complex involved in regulation of p53/TP53. Interacts with NOP53; the interaction is direct and promotes ARF nucleoplasmic relocalization and ubiquitin-mediated proteasomal degradation. Interacts with TTF1 (via the N-terminal region (NRD) and a C-terminal region); the interaction is direct and inhibits the nucleolar localization of TTF1. Interacts with C1QBP. Post-translationally, ubiquitinated in normal cells by TRIP12 via the ubiquitin fusion degradation (UFD) pathway, a process that mediates ubiquitination at the N-terminus, regardless of the absence of lysine residues. Ubiquitination leads to its proteasomal degradation. In cancer cells, however, TRIP12 is located in a different cell compartment, preventing ubiquitination and degradation.

The protein localises to the nucleus. It localises to the nucleolus. The protein resides in the nucleoplasm. It is found in the mitochondrion. Capable of inducing cell cycle arrest in G1 and G2 phases. Acts as a tumor suppressor. Binds to MDM2 and blocks its nucleocytoplasmic shuttling by sequestering it in the nucleolus. This inhibits the oncogenic action of MDM2 by blocking MDM2-induced degradation of p53 and enhancing p53-dependent transactivation and apoptosis. Also induces G2 arrest and apoptosis in a p53-independent manner by preventing the activation of cyclin B1/CDC2 complexes. Binds to BCL6 and down-regulates BCL6-induced transcriptional repression. Binds to E2F1 and MYC and blocks their transcriptional activator activity but has no effect on MYC transcriptional repression. Binds to TOP1/TOPOI and stimulates its activity. This complex binds to rRNA gene promoters and may play a role in rRNA transcription and/or maturation. Interacts with NPM1/B23 and promotes its polyubiquitination and degradation, thus inhibiting rRNA processing. Plays a role in inhibiting ribosome biogenesis, perhaps by binding to the nucleolar localization sequence of transcription termination factor TTF1, and thereby preventing nucleolar localization of TTF1. Interacts with COMMD1 and promotes its 'Lys63'-linked polyubiquitination. Interacts with UBE2I/UBC9 and enhances sumoylation of a number of its binding partners including MDM2 and E2F1. Binds to HUWE1 and represses its ubiquitin ligase activity. May play a role in controlling cell proliferation and apoptosis during mammary gland development. Functionally, may be involved in regulation of autophagy and caspase-independent cell death; the short-lived mitochondrial isoform is stabilized by C1QBP. This Mus musculus (Mouse) protein is Tumor suppressor ARF.